We begin with the raw amino-acid sequence, 326 residues long: Undecaprenyl-phosphate 4-deoxy-4-formamido-L-arabinose transferase (326 aa).

The next 2 membrane-spanning stretches (helical) occupy residues 235 to 255 (LLSV…VLLI) and 270 to 290 (VFTL…GMGL).

It belongs to the glycosyltransferase 2 family.

The protein localises to the cell inner membrane. The enzyme catalyses UDP-4-deoxy-4-formamido-beta-L-arabinose + di-trans,octa-cis-undecaprenyl phosphate = 4-deoxy-4-formamido-alpha-L-arabinopyranosyl di-trans,octa-cis-undecaprenyl phosphate + UDP. It participates in glycolipid biosynthesis; 4-amino-4-deoxy-alpha-L-arabinose undecaprenyl phosphate biosynthesis; 4-amino-4-deoxy-alpha-L-arabinose undecaprenyl phosphate from UDP-4-deoxy-4-formamido-beta-L-arabinose and undecaprenyl phosphate: step 1/2. It functions in the pathway bacterial outer membrane biogenesis; lipopolysaccharide biosynthesis. Functionally, catalyzes the transfer of 4-deoxy-4-formamido-L-arabinose from UDP to undecaprenyl phosphate. The modified arabinose is attached to lipid A and is required for resistance to polymyxin and cationic antimicrobial peptides. The sequence is that of Undecaprenyl-phosphate 4-deoxy-4-formamido-L-arabinose transferase from Serratia proteamaculans (strain 568).